We begin with the raw amino-acid sequence, 356 residues long: 3-dehydroquinate synthase (356 aa).

Residues 69–74, 103–107, 127–128, lysine 140, and lysine 149 each bind NAD(+); these read DGEQYK, GVVGD, and TT. 3 residues coordinate Zn(2+): glutamate 182, histidine 245, and histidine 262.

It belongs to the sugar phosphate cyclases superfamily. Dehydroquinate synthase family. The cofactor is Co(2+). It depends on Zn(2+) as a cofactor. Requires NAD(+) as cofactor.

It localises to the cytoplasm. The enzyme catalyses 7-phospho-2-dehydro-3-deoxy-D-arabino-heptonate = 3-dehydroquinate + phosphate. It functions in the pathway metabolic intermediate biosynthesis; chorismate biosynthesis; chorismate from D-erythrose 4-phosphate and phosphoenolpyruvate: step 2/7. Functionally, catalyzes the conversion of 3-deoxy-D-arabino-heptulosonate 7-phosphate (DAHP) to dehydroquinate (DHQ). This chain is 3-dehydroquinate synthase, found in Pseudoalteromonas translucida (strain TAC 125).